The following is a 600-amino-acid chain: ATP-dependent lipid A-core flippase (600 aa).

4 helical membrane-spanning segments follow: residues 26-46, 82-102, 167-187, and 266-286; these read VGIF…QPML, LLIV…NYFL, VFLF…MLAI, and PMLQ…VLFL. Positions 30–321 constitute an ABC transmembrane type-1 domain; the sequence is LLSILGFVIF…LSEVSSTIQK (292 aa). One can recognise an ABC transporter domain in the interval 353 to 589; that stretch reads LEVKNLSFFY…NGYYARLHAM (237 aa). Residue 387-394 coordinates ATP; it reads GRSGSGKS.

Belongs to the ABC transporter superfamily. Lipid exporter (TC 3.A.1.106) family. Homodimer.

It is found in the cell inner membrane. It catalyses the reaction ATP + H2O + lipid A-core oligosaccharideSide 1 = ADP + phosphate + lipid A-core oligosaccharideSide 2.. Functionally, involved in lipopolysaccharide (LPS) biosynthesis. Translocates lipid A-core from the inner to the outer leaflet of the inner membrane. Transmembrane domains (TMD) form a pore in the inner membrane and the ATP-binding domain (NBD) is responsible for energy generation. The polypeptide is ATP-dependent lipid A-core flippase (Pseudomonas syringae pv. tomato (strain ATCC BAA-871 / DC3000)).